The sequence spans 60 residues: MAKLLVKQVRSKINCPLDQKRGLEALGLRKMGQVVEHDSNPTILGMINKVKHLVSVEEAK.

The protein belongs to the universal ribosomal protein uL30 family. As to quaternary structure, part of the 50S ribosomal subunit.

In Flavobacterium psychrophilum (strain ATCC 49511 / DSM 21280 / CIP 103535 / JIP02/86), this protein is Large ribosomal subunit protein uL30.